A 97-amino-acid polypeptide reads, in one-letter code: UPF0235 protein Ppha_2415 (97 aa).

It belongs to the UPF0235 family.

This is UPF0235 protein Ppha_2415 from Pelodictyon phaeoclathratiforme (strain DSM 5477 / BU-1).